Here is a 309-residue protein sequence, read N- to C-terminus: Elongation factor Ts (309 aa).

Positions Thr82 to Val85 are involved in Mg(2+) ion dislocation from EF-Tu.

This sequence belongs to the EF-Ts family.

The protein localises to the cytoplasm. In terms of biological role, associates with the EF-Tu.GDP complex and induces the exchange of GDP to GTP. It remains bound to the aminoacyl-tRNA.EF-Tu.GTP complex up to the GTP hydrolysis stage on the ribosome. This is Elongation factor Ts from Rickettsia rickettsii (strain Iowa).